The following is a 519-amino-acid chain: Probable cytosol aminopeptidase (519 aa).

Mn(2+)-binding residues include K283 and D288. K295 is an active-site residue. Mn(2+) contacts are provided by D306, D365, and E367. Residue R369 is part of the active site.

Belongs to the peptidase M17 family. Mn(2+) serves as cofactor.

It localises to the cytoplasm. The enzyme catalyses Release of an N-terminal amino acid, Xaa-|-Yaa-, in which Xaa is preferably Leu, but may be other amino acids including Pro although not Arg or Lys, and Yaa may be Pro. Amino acid amides and methyl esters are also readily hydrolyzed, but rates on arylamides are exceedingly low.. The catalysed reaction is Release of an N-terminal amino acid, preferentially leucine, but not glutamic or aspartic acids.. In terms of biological role, presumably involved in the processing and regular turnover of intracellular proteins. Catalyzes the removal of unsubstituted N-terminal amino acids from various peptides. The chain is Probable cytosol aminopeptidase from Mycobacterium ulcerans (strain Agy99).